The sequence spans 274 residues: Large ribosomal subunit protein uL2 (274 aa).

Disordered regions lie at residues 28 to 54 (KPYA…TRHI) and 221 to 274 (RGTA…RTKK). The span at 39-49 (KTGGRNNNGRI) shows a compositional bias: polar residues.

Belongs to the universal ribosomal protein uL2 family. As to quaternary structure, part of the 50S ribosomal subunit. Forms a bridge to the 30S subunit in the 70S ribosome.

In terms of biological role, one of the primary rRNA binding proteins. Required for association of the 30S and 50S subunits to form the 70S ribosome, for tRNA binding and peptide bond formation. It has been suggested to have peptidyltransferase activity; this is somewhat controversial. Makes several contacts with the 16S rRNA in the 70S ribosome. The polypeptide is Large ribosomal subunit protein uL2 (Photorhabdus laumondii subsp. laumondii (strain DSM 15139 / CIP 105565 / TT01) (Photorhabdus luminescens subsp. laumondii)).